The chain runs to 688 residues: MKEKENSLFNSKMIKRAMKDSFIKLNPKIQLQNPVMFIVYIASILTTVLYVFSLFGIKDNSPSFILFISILLWFTVLFANFAEAIAEGRGKAQADALRSAKKDILANRIESIETKEKVSKVNSTELRKGDLIIVKAGEQIPADGDVVYGAASVDESAITGESAPVIRESGGDRSAVTGGTQVISDYIVVKVSNNPGESFMDKMIAMVEGASRKKTPNEIALQILLVSLTIIFLVVTASLYAYSEFASNQNGVINSTSVTSLLALLVCLAPTTIGALLSAIGIAGMSRLNQANVLAMSGRAIEAAGDVDILMLDKTGTITLGNRQASEFLPVDGANIEELADAAQLSSLADETPEGRSIVILAKEQFGIRGRDLSSSNAKFIEFTAKTRMSGVDFNGDEIRKGSAESIKKYITEHGGDFSDECEKKVEEIARKGGTPLVVAKNYKVLGIIYLKDIVKRGVKEKFSDLRKMGIKTIMITGDNPLTAAAIAAEAGVDDFLAEATPEGKLNMIKDFQKKGHLVAMTGDGTNDAPALAQADVAVAMNTGTQAAKEAGNMVDLDSSPTKLIEIVKIGKQLLMTRGALTTFSIANDIAKYFAIIPPLFIGLFPELSRLNIMNLQSPESAILSAVIYNAFIIIFLIPLALKGVKYREVSANKLLSRNLFVYGLGGIIAPFIAIKGIDILITMLGIV.

Helical transmembrane passes span 37-57, 65-85, 219-239, and 262-282; these read FIVY…LFGI, ILFI…AEAI, IALQ…TASL, and LALL…AIGI. Residue aspartate 313 is the 4-aspartylphosphate intermediate of the active site. ATP is bound by residues aspartate 350, glutamate 354, 383 to 390, and lysine 401; that span reads FTAKTRMS. Mg(2+)-binding residues include aspartate 524 and aspartate 528. The next 3 membrane-spanning stretches (helical) occupy residues 586-606, 622-642, and 668-688; these read IAND…GLFP, AILS…PLAL, and IIAP…LGIV.

This sequence belongs to the cation transport ATPase (P-type) (TC 3.A.3) family. Type IA subfamily. As to quaternary structure, the system is composed of three essential subunits: KdpA, KdpB and KdpC.

The protein localises to the cell membrane. It catalyses the reaction K(+)(out) + ATP + H2O = K(+)(in) + ADP + phosphate + H(+). Part of the high-affinity ATP-driven potassium transport (or Kdp) system, which catalyzes the hydrolysis of ATP coupled with the electrogenic transport of potassium into the cytoplasm. This subunit is responsible for energy coupling to the transport system and for the release of the potassium ions to the cytoplasm. The protein is Potassium-transporting ATPase ATP-binding subunit of Clostridium perfringens (strain ATCC 13124 / DSM 756 / JCM 1290 / NCIMB 6125 / NCTC 8237 / Type A).